A 520-amino-acid polypeptide reads, in one-letter code: 2-isopropylmalate synthase (520 aa).

Positions 5–267 constitute a Pyruvate carboxyltransferase domain; that stretch reads VIIFDTTLRD…HTNINHQEIY (263 aa). Residues aspartate 14, histidine 202, histidine 204, and asparagine 238 each contribute to the Mn(2+) site. Positions 392–520 are regulatory domain; sequence RLDYFSVQSG…RLQQNNQEMV (129 aa).

It belongs to the alpha-IPM synthase/homocitrate synthase family. LeuA type 1 subfamily. In terms of assembly, homodimer. Mn(2+) is required as a cofactor.

It is found in the cytoplasm. It carries out the reaction 3-methyl-2-oxobutanoate + acetyl-CoA + H2O = (2S)-2-isopropylmalate + CoA + H(+). Its pathway is amino-acid biosynthesis; L-leucine biosynthesis; L-leucine from 3-methyl-2-oxobutanoate: step 1/4. Its function is as follows. Catalyzes the condensation of the acetyl group of acetyl-CoA with 3-methyl-2-oxobutanoate (2-ketoisovalerate) to form 3-carboxy-3-hydroxy-4-methylpentanoate (2-isopropylmalate). The protein is 2-isopropylmalate synthase of Yersinia enterocolitica serotype O:8 / biotype 1B (strain NCTC 13174 / 8081).